The following is a 474-amino-acid chain: MSEGLVQAAYILAALLFIMSLAGLSKHETAKAGCWFGIVGMTIALIATIFGPHSEGTFWIIIAMIIGGAIGVQRALKVEMTEMPELVAILHSFVGLAAVLVGFNSYGLHHEALMPEGLDAAAQAAFVAEQAVLTNIHNVEVFLGIFIGAVTFTGSVVAFGKLSGKINSKALMLPHRHKLNLAALVVSALLMVAFLNNPESIFPVLLMTAIALAFGWHLVASIGGADMPVVVSMLNSYSGWAAAAAGFILNNDLLIVTGALVGSSGAILSYIMCKAMNRSFVSVIAGGFGNDVQVSSSEEQGEHRETTAEEVAELLKNASSVIITPGYGMAVAQAQYPVADITAKLRERGVNVRFGIHPVAGRLPGHMNVLLAEAKVPYDVVLEMDEINDDFADTDVVLVIGANDTVNPAAMEDPNSPIAGMPVLEVWKAQNVIVFKRSMAVGYAGVQNPLFFKENTQMLFGDAKDRVEDILKAL.

The next 9 helical transmembrane spans lie at glycine 4–leucine 24, isoleucine 46–isoleucine 66, methionine 83–phenylalanine 103, valine 132–phenylalanine 152, leucine 181–serine 200, phenylalanine 202–isoleucine 222, valine 229–leucine 249, leucine 253–cysteine 273, and valine 321–isoleucine 341.

It belongs to the PNT beta subunit family. In terms of assembly, heterodimer of an alpha and a beta chain.

It localises to the cell inner membrane. The catalysed reaction is NAD(+) + NADPH + H(+)(in) = NADH + NADP(+) + H(+)(out). The transhydrogenation between NADH and NADP is coupled to respiration and ATP hydrolysis and functions as a proton pump across the membrane. The chain is NAD(P) transhydrogenase subunit beta (pntB) from Haemophilus influenzae (strain ATCC 51907 / DSM 11121 / KW20 / Rd).